Here is a 177-residue protein sequence, read N- to C-terminus: dCTP deaminase, dUMP-forming (177 aa).

DCTP contacts are provided by residues 95-100, Asp-112, 120-122, Gln-141, Tyr-155, and Gln-162; these read RSSLGR and TLE. Catalysis depends on Glu-122, which acts as the Proton donor/acceptor.

It belongs to the dCTP deaminase family. As to quaternary structure, homotrimer.

The catalysed reaction is dCTP + 2 H2O = dUMP + NH4(+) + diphosphate. The protein operates within pyrimidine metabolism; dUMP biosynthesis; dUMP from dCTP: step 1/1. Its function is as follows. Bifunctional enzyme that catalyzes both the deamination of dCTP to dUTP and the hydrolysis of dUTP to dUMP without releasing the toxic dUTP intermediate. This chain is dCTP deaminase, dUMP-forming, found in Hydrogenobaculum sp. (strain Y04AAS1).